The following is a 475-amino-acid chain: MDFQHRPGGKTGSGGVASSSESNRDRRERLRQLALETIDINKDPYFMKNHLGSYECKLCLTLHNNEGSYLAHTQGKKHQTNLARRAAKEAKEAPAQPAPEQVKVEVKKFVKIGRPGYKVTKQRDTEMGQQSLLFQIDYPEIAEGIMPRHRFMSAYEQRIEPPDRRWQYLLMAAEPYETIAFKVPSREIDKAEGKFFFLQFHFKMEKPPAPPSLPAGPPGVKRPPPPLMNGLPPRPPLPDALPPPPPGGLPLPPMPPTGPAPSGPPGPPQMPPPAPGVHPPAPVVHPPTSGVHPPAPGVHPPAPVVHPPTSGVHPPAPGVHPPTPGVHPPAPGVHPPAPGVHPPAPGVHPPTPGVHPPAPGVHPPAPGVHPPAPGVHPPPSAGVHPQAPGVHPPAPAVHPQAPGVHPPAPGIHPQAPGVHPQPPPGVHPAAPGVHPQPPGVHPSNPGVHPAPMPPMLRPPLPSDGPGNMPPPPPGN.

N-acetylmethionine is present on Met-1. The disordered stretch occupies residues 1 to 27 (MDFQHRPGGKTGSGGVASSSESNRDRR). Lys-10 is subject to N6-acetyllysine. The segment at 54-84 (YECKLCLTLHNNEGSYLAHTQGKKHQTNLAR) adopts a Matrin-type zinc-finger fold. Ser-153 carries the post-translational modification Phosphoserine. Composition is skewed to pro residues over residues 208-285 (PAPP…PVVH), 293-306 (PPAPGVHPPAPVVH), 314-380 (PPAP…PPPS), and 448-475 (HPAPMPPMLRPPLPSDGPGNMPPPPPGN). A disordered region spans residues 208-475 (PAPPSLPAGP…GNMPPPPPGN (268 aa)).

Belongs to the SF3A2 family. In terms of assembly, component of the 17S U2 SnRNP complex, a ribonucleoprotein complex that contains small nuclear RNA (snRNA) U2 and a number of specific proteins. Part of the SF3A subcomplex of the 17S U2 SnRNP complex which is composed of three subunits; SF3A3/SAP61, SF3A2/SAP62 and SF3A1/SAP114. SF3A associates with the splicing factor SF3B and a 12S RNA unit to form the mature 17S U2 small nuclear ribonucleoprotein complex (17S U2 snRNP). Identified in the spliceosome 'E' complex, a precursor of the spliceosome 'A' complex. Identified in the spliceosome 'A' and 'B' complexes. Identified in the spliceosome 'C' complex. Interacts with HTATSF1. Found in all tissues examined.

Its subcellular location is the nucleus. In terms of biological role, component of the 17S U2 SnRNP complex of the spliceosome, a large ribonucleoprotein complex that removes introns from transcribed pre-mRNAs. The 17S U2 SnRNP complex (1) directly participates in early spliceosome assembly and (2) mediates recognition of the intron branch site during pre-mRNA splicing by promoting the selection of the pre-mRNA branch-site adenosine, the nucleophile for the first step of splicing. Within the 17S U2 SnRNP complex, SF3A2 is part of the SF3A subcomplex that contributes to the assembly of the 17S U2 snRNP, and the subsequent assembly of the pre-spliceosome 'E' complex and the pre-catalytic spliceosome 'A' complex. Involved in pre-mRNA splicing as a component of pre-catalytic spliceosome 'B' complexes, including the Bact complex. Interacts directly with the duplex formed by U2 snRNA and the intron. The protein is Splicing factor 3A subunit 2 (Sf3a2) of Mus musculus (Mouse).